A 158-amino-acid polypeptide reads, in one-letter code: Chromobox protein homolog 7 (158 aa).

The 59-residue stretch at 11–69 (FAVESIRKKRVRKGKVEYLVKWKGWPPKYSTWEPEEHILDPRLVMAYEEKEERDRASGY) folds into the Chromo domain. The interval 60–127 (KEERDRASGY…WTPTLPSSEV (68 aa)) is disordered. Positions 68–78 (GYRKRGPKPRR) are enriched in basic residues.

As to quaternary structure, component of a PRC1-like complex. Distinct PRC1-like core complexes are composed of a RING1 subunit (RING1B or RING1A), one of the six PCGF proteins (PCGF1-6), one PHC protein (PHC1-3) and one of the CBX proteins (CBX2, CBX4, CBX6, CBX7 or CBX8). The composition of the PRC1 complex may differ between the PRC1 complex in pluripotent embryonic stem cells containing RNF2, CBX7 and PCGF2, and the PRC1 complex in differentiating cells containing RNF2, CBX2, CBX4 and BMI1. Interacts with RING1. Interacts with RNF2, PHC1 and PCGF2. Interacts (via chromodomain) with histone H3K9Me3 and H3K27me3. Interacts with H3K9Me2 and H4K20Me1. Interacts (via chromodomain) with single-stranded and double-stranded RNA; RNA binding seems to be required for the localization to chromatin. Interacts with PCGF1, PCGF3, PCGF5 and PCGF6. In terms of tissue distribution, expressed in embryonic stem cells.

It localises to the nucleus. Its subcellular location is the chromosome. Functionally, component of a Polycomb group (PcG) multiprotein PRC1-like complex, a complex class required to maintain the transcriptionally repressive state of many genes, including Hox genes, throughout development. PcG PRC1 complex acts via chromatin remodeling and modification of histones; it mediates monoubiquitination of histone H2A 'Lys-119', rendering chromatin heritably changed in its expressibility. Promotes histone H3 trimethylation at 'Lys-9' (H3K9me3). Binds to histone H3 trimethylated at 'Lys-9' (H3K9me3) or at 'Lys-27' (H3K27me3). Trimethylation at 'Lys-27' (H3K27me3) is important for chromatin recruitment. May possibly also bind trimethylated lysine residues in other proteins (in vitro). Binds non-coding, single-stranded RNA and double-stranded RNA. Plays a role in the timely repression of differentiation-specific genes in pluripotent embryonic stem cells to maintain the undifferentiated state. Regulator of cellular lifespan by maintaining the repression of CDKN2A, but not by inducing telomerase activity. This chain is Chromobox protein homolog 7 (Cbx7), found in Mus musculus (Mouse).